The primary structure comprises 142 residues: Large ribosomal subunit protein uL11 (142 aa).

Belongs to the universal ribosomal protein uL11 family. In terms of assembly, part of the ribosomal stalk of the 50S ribosomal subunit. Interacts with L10 and the large rRNA to form the base of the stalk. L10 forms an elongated spine to which L12 dimers bind in a sequential fashion forming a multimeric L10(L12)X complex. Post-translationally, one or more lysine residues are methylated.

Functionally, forms part of the ribosomal stalk which helps the ribosome interact with GTP-bound translation factors. This is Large ribosomal subunit protein uL11 from Rhodopseudomonas palustris (strain BisB18).